The sequence spans 227 residues: MCRHVAWLGAPRSLADLVLDPPQGLLVQSYAPRRQKHGLMNADGWGAGFFDDEGVARRWRSDKPLWGDASFASVAPALRSRCVLAAVRSATIGMPIEPSASAPFSDGQWLLSHNGLVDRGVLPLTGAAESTVDSAIVAALIFSRGLDALGATIAEVGELDPNARLNILAANGSRLLATTWGDTLSVLHRPDGVVLASEPYDDDPGWSDIPDRHLVDVRDAHVVVTPL.

The Nucleophile role is filled by Cys-2. The Glutamine amidotransferase type-2 domain maps to 2 to 227 (CRHVAWLGAP…RDAHVVVTPL (226 aa)).

It catalyses the reaction gamma-L-glutamyl-hercynylcysteine S-oxide + H2O = S-(hercyn-2-yl)-L-cysteine S-oxide + L-glutamate. It functions in the pathway amino-acid biosynthesis; ergothioneine biosynthesis. Functionally, catalyzes the hydrolysis of the gamma-glutamyl amide bond of hercynyl-gamma-L-glutamyl-L-cysteine sulfoxide to produce hercynylcysteine sulfoxide, a step in the biosynthesis pathway of ergothioneine. In Mycolicibacterium smegmatis (strain ATCC 700084 / mc(2)155) (Mycobacterium smegmatis), this protein is Gamma-glutamyl-hercynylcysteine sulfoxide hydrolase.